A 140-amino-acid polypeptide reads, in one-letter code: Large ribosomal subunit protein uL11 (140 aa).

Belongs to the universal ribosomal protein uL11 family. As to quaternary structure, part of the ribosomal stalk of the 50S ribosomal subunit. Interacts with L10 and the large rRNA to form the base of the stalk. L10 forms an elongated spine to which L12 dimers bind in a sequential fashion forming a multimeric L10(L12)X complex. In terms of processing, one or more lysine residues are methylated.

Forms part of the ribosomal stalk which helps the ribosome interact with GTP-bound translation factors. This chain is Large ribosomal subunit protein uL11, found in Desulfatibacillum aliphaticivorans.